We begin with the raw amino-acid sequence, 136 residues long: Putative pre-16S rRNA nuclease (136 aa).

This sequence belongs to the YqgF nuclease family.

The protein resides in the cytoplasm. Could be a nuclease involved in processing of the 5'-end of pre-16S rRNA. This Francisella tularensis subsp. mediasiatica (strain FSC147) protein is Putative pre-16S rRNA nuclease.